The sequence spans 122 residues: Protein C10 (122 aa).

Belongs to the UPF0456 family.

The protein resides in the cytoplasm. The protein is Protein C10 of Danio rerio (Zebrafish).